Reading from the N-terminus, the 106-residue chain is Urease subunit beta (106 aa).

It belongs to the urease beta subunit family. Heterotrimer of UreA (gamma), UreB (beta) and UreC (alpha) subunits. Three heterotrimers associate to form the active enzyme. The apoenzyme interacts with an accessory complex composed of UreD, UreF and UreG, which is required for the assembly of the nickel containing metallocenter of UreC. The UreE protein may also play a direct role as a metallochaperone in nickel transfer to the urease apoprotein.

Its subcellular location is the cytoplasm. The enzyme catalyses urea + 2 H2O + H(+) = hydrogencarbonate + 2 NH4(+). It participates in nitrogen metabolism; urea degradation; CO(2) and NH(3) from urea (urease route): step 1/1. With respect to regulation, the apoenzyme can be activated in vitro in the presence of nickel ions and carbon dioxide, which promotes carboxylation of 'Lys-217' of the UreC (alpha) subunit. The sequence is that of Urease subunit beta from Klebsiella aerogenes (Enterobacter aerogenes).